The sequence spans 345 residues: Selenide, water dikinase (345 aa).

The active site involves cysteine 16. ATP contacts are provided by residues lysine 19 and 45-47 (TSE). Position 48 (aspartate 48) interacts with Mg(2+). Residues aspartate 65, aspartate 88, and 136-138 (GHT) contribute to the ATP site. Position 88 (aspartate 88) interacts with Mg(2+). Aspartate 224 contacts Mg(2+).

This sequence belongs to the selenophosphate synthase 1 family. Class I subfamily. Homodimer. Mg(2+) serves as cofactor.

It carries out the reaction hydrogenselenide + ATP + H2O = selenophosphate + AMP + phosphate + 2 H(+). In terms of biological role, synthesizes selenophosphate from selenide and ATP. In Aliarcobacter butzleri (strain RM4018) (Arcobacter butzleri), this protein is Selenide, water dikinase.